Consider the following 507-residue polypeptide: tRNA(Ile)-lysidine synthase (507 aa).

24–29 (SGGGDS) contacts ATP. The CMP/dCMP-type deaminase domain maps to 370–500 (PPEEAHMAEA…KLLRDFFARL (131 aa)). Residues His420, Cys445, and Cys448 each coordinate Zn(2+).

The protein belongs to the tRNA(Ile)-lysidine synthase family.

It localises to the cytoplasm. It carries out the reaction cytidine(34) in tRNA(Ile2) + L-lysine + ATP = lysidine(34) in tRNA(Ile2) + AMP + diphosphate + H(+). Ligates lysine onto the cytidine present at position 34 of the AUA codon-specific tRNA(Ile) that contains the anticodon CAU, in an ATP-dependent manner. Cytidine is converted to lysidine, thus changing the amino acid specificity of the tRNA from methionine to isoleucine. The polypeptide is tRNA(Ile)-lysidine synthase (tilS) (Thermus thermophilus (strain ATCC 27634 / DSM 579 / HB8)).